The following is a 357-amino-acid chain: Naringenin,2-oxoglutarate 3-dioxygenase (357 aa).

The Fe2OG dioxygenase domain occupies 189-293 (CVDMDQKIVV…RLSIATFQNP (105 aa)). Fe cation-binding residues include histidine 216, aspartate 218, and histidine 274. Arginine 284 contributes to the 2-oxoglutarate binding site.

It belongs to the iron/ascorbate-dependent oxidoreductase family. The cofactor is Fe(2+). It depends on L-ascorbate as a cofactor.

It carries out the reaction a (2S)-flavan-4-one + 2-oxoglutarate + O2 = a (2R,3R)-dihydroflavonol + succinate + CO2. The protein operates within secondary metabolite biosynthesis; flavonoid biosynthesis. Its function is as follows. Catalyzes the 3-beta-hydroxylation of 2S-flavanones to 2R,3R-dihydroflavonols which are intermediates in the biosynthesis of flavonols, anthocyanidins, catechins and proanthocyanidins in plants. The polypeptide is Naringenin,2-oxoglutarate 3-dioxygenase (FHT) (Matthiola incana (Common stock)).